The primary structure comprises 290 residues: GTPase Era (290 aa).

An Era-type G domain is found at 2–169 (KSGFVSIIGR…KDKIYENLNE (168 aa)). Residues 10-17 (GRPSTGKS) are G1. 10 to 17 (GRPSTGKS) provides a ligand contact to GTP. The interval 36 to 40 (QTTRN) is G2. The G3 stretch occupies residues 57 to 60 (DTPG). GTP is bound by residues 57-61 (DTPGF) and 119-122 (NKID). Residues 119 to 122 (NKID) form a G4 region. Residues 148 to 150 (ISA) are G5. In terms of domain architecture, KH type-2 spans 200–276 (LKEELPYSIY…NLFLQVKLRK (77 aa)).

The protein belongs to the TRAFAC class TrmE-Era-EngA-EngB-Septin-like GTPase superfamily. Era GTPase family. Monomer.

It localises to the cytoplasm. The protein localises to the cell inner membrane. Its function is as follows. An essential GTPase that binds both GDP and GTP, with rapid nucleotide exchange. Plays a role in 16S rRNA processing and 30S ribosomal subunit biogenesis and possibly also in cell cycle regulation and energy metabolism. This Borrelia duttonii (strain Ly) protein is GTPase Era.